Consider the following 245-residue polypeptide: tRNA pseudouridine synthase A (245 aa).

The active-site Nucleophile is D52. Y111 provides a ligand contact to substrate.

The protein belongs to the tRNA pseudouridine synthase TruA family. In terms of assembly, homodimer.

It catalyses the reaction uridine(38/39/40) in tRNA = pseudouridine(38/39/40) in tRNA. Functionally, formation of pseudouridine at positions 38, 39 and 40 in the anticodon stem and loop of transfer RNAs. In Thermotoga sp. (strain RQ2), this protein is tRNA pseudouridine synthase A.